We begin with the raw amino-acid sequence, 766 residues long: MASTRSIELEHFEERDKRPRPGSRRGAPSSSGGSSSSGPKGNGLIPSPAHSAHCSFYRTRTLQALSSEKKAKKARFYRNGDRYFKGLVFAISSDRFRSFDALLIELTRSLSDNVNLPQGVRTIYTIDGSRKVTSLDELLEGESYVCASNEPFRKVDYTKNINPNWSVNIKGGTSRALAAASSVKSEVKESKDFIKPKLVTVIRSGVKPRKAVRILLNKKTAHSFEQVLTDITEAIKLDSGVVKRLCTLDGKQVTCLQDFFGDDDVFIACGPEKFRYAQDDFVLDHSECRVLKSSYSRSSAVKYSGSKSPGPSRRSKSPASVNGTPSSQLSTPKSTKSSSSSPTSPGSFRGLKQISAHGRSSSNVNGGPELDRCISPEGVNGNRCSESSTLLEKYKIGKVIGDGNFAVVKECIDRSTGKEFALKIIDKAKCCGKEHLIENEVSILRRVKHPNIIMLVEEMETATELFLVMELVKGGDLFDAITSSTKYTERDGSAMVYNLANALRYLHGLSIVHRDIKPENLLVCEYPDGTKSLKLGDFGLATVVEGPLYTVCGTPTYVAPEIIAETGYGLKVDIWAAGVITYILLCGFPPFRSENNLQEDLFDQILAGKLEFPAPYWDNITDSAKELISQMLQVNVEARCTAGQILSHPWVSDDASQENNMQAEVTGKLKQHFNNALPKQNSTTTGVSVIMNTALDKEGQIFCSKHCQDSGRPGMEPISPVPPSVEEIPVPGEAVPAPTPPESPTPHPPPAAPGGERAGTWRRHRD.

Residues 1–45 (MASTRSIELEHFEERDKRPRPGSRRGAPSSSGGSSSSGPKGNGLI) are disordered. The span at 7-19 (IELEHFEERDKRP) shows a compositional bias: basic and acidic residues. A compositionally biased stretch (low complexity) spans 24–39 (RRGAPSSSGGSSSSGP). Phosphothreonine is present on Thr61. 2 consecutive Doublecortin domains span residues 72 to 158 (KKAR…VDYT) and 197 to 280 (KLVT…AQDD). Low complexity-rich tracts occupy residues 300 to 312 (AVKYSGSKSPGPS) and 324 to 347 (TPSSQLSTPKSTKSSSSSPTSPGS). The tract at residues 300–378 (AVKYSGSKSP…ELDRCISPEG (79 aa)) is disordered. Ser362 carries the post-translational modification Phosphoserine. One can recognise a Protein kinase domain in the interval 394–651 (YKIGKVIGDG…AGQILSHPWV (258 aa)). ATP is bound by residues 400–408 (IGDGNFAVV) and Lys423. The active-site Proton acceptor is Asp515. Ser647 carries the post-translational modification Phosphoserine. At Thr666 the chain carries Phosphothreonine. Positions 707–766 (CQDSGRPGMEPISPVPPSVEEIPVPGEAVPAPTPPESPTPHPPPAAPGGERAGTWRRHRD) are disordered. The span at 724-736 (SVEEIPVPGEAVP) shows a compositional bias: low complexity. Residues 737-752 (APTPPESPTPHPPPAA) show a composition bias toward pro residues.

It belongs to the protein kinase superfamily. CAMK Ser/Thr protein kinase family. CaMK subfamily. In terms of assembly, binds to and stabilizes microtubules. Interacts with MAPK8IP1/JIP-1, MAPK8IP2/JIP-2, MAPK9/JNK2, PPP1R9B/NEURABIN-2 and actin. Post-translationally, autophosphorylated. As to expression, expressed in the brain, heart and eyes.

It localises to the cytoplasm. The protein localises to the cytoskeleton. It catalyses the reaction L-seryl-[protein] + ATP = O-phospho-L-seryl-[protein] + ADP + H(+). It carries out the reaction L-threonyl-[protein] + ATP = O-phospho-L-threonyl-[protein] + ADP + H(+). In terms of biological role, protein kinase with a significantly reduced C(a2+)/CAM affinity and dependence compared to other members of the CaMK family. May play a role in the down-regulation of CRE-dependent gene activation probably by phosphorylation of the CREB coactivator CRTC2/TORC2 and the resulting retention of TORC2 in the cytoplasm. In Homo sapiens (Human), this protein is Serine/threonine-protein kinase DCLK2 (DCLK2).